Reading from the N-terminus, the 354-residue chain is Dihydroorotate dehydrogenase (quinone) (354 aa).

Residues 70-74 and threonine 94 each bind FMN; that span reads AGFDK. Lysine 74 provides a ligand contact to substrate. 119–123 contacts substrate; that stretch reads NAMGF. The FMN site is built by asparagine 148 and asparagine 181. Asparagine 181 is a substrate binding site. The active-site Nucleophile is serine 184. Asparagine 186 serves as a coordination point for substrate. Residues lysine 217 and threonine 245 each contribute to the FMN site. Residue 246–247 coordinates substrate; sequence NT. Residues glycine 265, glycine 294, and 315–316 each bind FMN; that span reads YS.

Belongs to the dihydroorotate dehydrogenase family. Type 2 subfamily. As to quaternary structure, monomer. The cofactor is FMN.

The protein localises to the cell membrane. The enzyme catalyses (S)-dihydroorotate + a quinone = orotate + a quinol. It participates in pyrimidine metabolism; UMP biosynthesis via de novo pathway; orotate from (S)-dihydroorotate (quinone route): step 1/1. Its function is as follows. Catalyzes the conversion of dihydroorotate to orotate with quinone as electron acceptor. This is Dihydroorotate dehydrogenase (quinone) from Sulfurovum sp. (strain NBC37-1).